Reading from the N-terminus, the 675-residue chain is Zeaxanthin epoxidase, chloroplastic (675 aa).

The N-terminal 25 residues, 1–25 (MASTVLYNSLTTSTTVFLRSHLPIS), are a transit peptide targeting the chloroplast. FAD-binding positions include 92–120 (RILV…KVFE) and 370–383 (KLTW…LLGD). The FHA domain maps to 558-622 (ICLSRKEDEP…HGTWITDNEG (65 aa)).

It depends on FAD as a cofactor.

The protein localises to the plastid. Its subcellular location is the chloroplast thylakoid membrane. It carries out the reaction all-trans-zeaxanthin + 4 reduced [2Fe-2S]-[ferredoxin] + 2 O2 + 4 H(+) = all-trans-violaxanthin + 4 oxidized [2Fe-2S]-[ferredoxin] + 2 H2O. Its pathway is plant hormone biosynthesis; abscisate biosynthesis. Inhibited by diphenyleneiodonium (DPI). Functionally, converts zeaxanthin into antheraxanthin and subsequently violaxanthin. Involved in the epoxidation of zeaxanthin. The chain is Zeaxanthin epoxidase, chloroplastic from Spinacia oleracea (Spinach).